The following is a 258-amino-acid chain: Deoxyribose-phosphate aldolase 2 (258 aa).

Aspartate 102 acts as the Proton donor/acceptor in catalysis. Lysine 165 serves as the catalytic Schiff-base intermediate with acetaldehyde. Residue lysine 199 is the Proton donor/acceptor of the active site.

This sequence belongs to the DeoC/FbaB aldolase family. DeoC type 2 subfamily.

The protein localises to the cytoplasm. It carries out the reaction 2-deoxy-D-ribose 5-phosphate = D-glyceraldehyde 3-phosphate + acetaldehyde. The protein operates within carbohydrate degradation; 2-deoxy-D-ribose 1-phosphate degradation; D-glyceraldehyde 3-phosphate and acetaldehyde from 2-deoxy-alpha-D-ribose 1-phosphate: step 2/2. Its function is as follows. Catalyzes a reversible aldol reaction between acetaldehyde and D-glyceraldehyde 3-phosphate to generate 2-deoxy-D-ribose 5-phosphate. The sequence is that of Deoxyribose-phosphate aldolase 2 (deoC2) from Vibrio vulnificus (strain YJ016).